Here is a 338-residue protein sequence, read N- to C-terminus: Galaxin (338 aa).

The first 23 residues, 1–23, serve as a signal peptide directing secretion; sequence MKPSGAFLSLCVVLLSLATHCFS. The segment covering 30-47 has biased composition (basic and acidic residues); that stretch reads RRDAHSDTNALKSRDRRQ. A disordered region spans residues 30 to 50; sequence RRDAHSDTNALKSRDRRQAPA.

Component of the acid-insoluble organic matrix of the aragonitic skeleton (at protein level). Initially, expressed in an aboral submarginal ring and then along calcifying septa.

The protein localises to the secreted. This is Galaxin from Acropora millepora (Staghorn coral).